A 279-amino-acid chain; its full sequence is Early nodulin-like protein 18 (279 aa).

The signal sequence occupies residues 1-24 (MAGAVATVSVGLAWLGLMAAAASA). The 109-residue stretch at 25-133 (TQFRVGGGRG…GEKLVVVVMA (109 aa)) folds into the Phytocyanin domain. A disulfide bridge links cysteine 82 with cysteine 121. A glycan (N-linked (GlcNAc...) asparagine) is linked at asparagine 83. Residues 138 to 256 (RHAPPPSPPA…ANDRSGAAAA (119 aa)) are disordered. A compositionally biased stretch (pro residues) spans 140–168 (APPPSPPAVPPPVAPVPMPSPASSPPSPA). Positions 169-185 (PAAATPSLAPSPVATTP) are enriched in low complexity. A compositionally biased stretch (pro residues) spans 186–199 (SPSPSVSPMAPAPA). Low complexity-rich tracts occupy residues 212-226 (AAMAPSPSTTPGGVA) and 234-256 (TDGANATTPAAPAANDRSGAAAA). A glycan (N-linked (GlcNAc...) asparagine) is linked at asparagine 238. A lipid anchor (GPI-anchor amidated serine) is attached at serine 251. Residues 252 to 279 (GAAAAAPVVAGVVVTSLGAYIGYAMLAI) constitute a propeptide, removed in mature form.

It belongs to the early nodulin-like (ENODL) family. As to expression, specifically expressed in reproductive tissues. Mainly observed in developing seeds and in mature leaves.

The protein localises to the cell membrane. May act as a carbohydrate transporter. Promotes tolerance to salt stress in a redox-dependent manner. The chain is Early nodulin-like protein 18 from Oryza sativa subsp. japonica (Rice).